The following is a 1241-amino-acid chain: DNA-directed RNA polymerase subunit beta (1241 aa).

The protein belongs to the RNA polymerase beta chain family. As to quaternary structure, the RNAP catalytic core consists of 2 alpha, 1 beta, 1 beta' and 1 omega subunit. When a sigma factor is associated with the core the holoenzyme is formed, which can initiate transcription.

The catalysed reaction is RNA(n) + a ribonucleoside 5'-triphosphate = RNA(n+1) + diphosphate. In terms of biological role, DNA-dependent RNA polymerase catalyzes the transcription of DNA into RNA using the four ribonucleoside triphosphates as substrates. This is DNA-directed RNA polymerase subunit beta from Clostridium botulinum (strain Alaska E43 / Type E3).